Consider the following 234-residue polypeptide: Urease subunit alpha (234 aa).

Positions 1–102 are urease gamma; that stretch reads MKLTPKELDK…LVTIHTPVEA (102 aa). The urease beta stretch occupies residues 103–234; it reads GSDKLAPGEV…GTINCGCDNK (132 aa).

In the N-terminal section; belongs to the urease gamma subunit family. The protein in the C-terminal section; belongs to the urease beta subunit family. In terms of assembly, heterohexamer of 3 UreA (alpha) and 3 UreB (beta) subunits.

The protein resides in the cytoplasm. The enzyme catalyses urea + 2 H2O + H(+) = hydrogencarbonate + 2 NH4(+). Its pathway is nitrogen metabolism; urea degradation; CO(2) and NH(3) from urea (urease route): step 1/1. The protein is Urease subunit alpha of Helicobacter heilmannii.